The sequence spans 109 residues: RNA-binding protein Hfq (109 aa).

One can recognise a Sm domain in the interval 9-68; that stretch reads DPFLNALRKEKVSVSVYLVNGIKLQGQVEAFDQFCIVLRNTVNQMVYKHAISTIVPAKSV.

Belongs to the Hfq family. As to quaternary structure, homohexamer.

Its function is as follows. RNA chaperone that binds small regulatory RNA (sRNAs) and mRNAs to facilitate mRNA translational regulation in response to envelope stress, environmental stress and changes in metabolite concentrations. Also binds with high specificity to tRNAs. This is RNA-binding protein Hfq from Francisella philomiragia subsp. philomiragia (strain ATCC 25017 / CCUG 19701 / FSC 153 / O#319-036).